A 297-amino-acid chain; its full sequence is Aspartate dehydrogenase domain-containing protein (297 aa).

Residues Ser24 and Ser172 each carry the phosphoserine modification.

The protein belongs to the L-aspartate dehydrogenase family.

The protein is Aspartate dehydrogenase domain-containing protein of Rattus norvegicus (Rat).